We begin with the raw amino-acid sequence, 145 residues long: MLIFLWCGAVCVSLLGAANIPPHPLNLINFMEMIRYTIPCEKTWGEYADYGCYCGAGGSGRPIDALDRCCYVHDNCYGDAEKKHKCNPKTQSYSYKLTKRTIICYGAAGTCARIVCDCDRTAALCFGNSEYIERHKNIDTKRHCR.

The signal sequence occupies residues M1–A17. A propeptide spanning residues A18–L25 is cleaved from the precursor. Cystine bridges form between C52–C144, C54–C70, C69–C125, C76–C118, C86–C111, and C104–C116. Ca(2+)-binding residues include Y53, G55, and G57. H73 is an active-site residue. D74 is a binding site for Ca(2+). D119 is an active-site residue.

This sequence belongs to the phospholipase A2 family. Group I subfamily. D49 sub-subfamily. In terms of assembly, heterodimer; disulfide-linked. The A chains have phospholipase A2 activity and the B chains show homology with the basic protease inhibitors. The A2 chain is found in beta-3 and beta-4 bungarotoxins. Requires Ca(2+) as cofactor. In terms of tissue distribution, expressed by the venom gland.

Its subcellular location is the secreted. It carries out the reaction a 1,2-diacyl-sn-glycero-3-phosphocholine + H2O = a 1-acyl-sn-glycero-3-phosphocholine + a fatty acid + H(+). Functionally, snake venom phospholipase A2 (PLA2) that inhibits neuromuscular transmission by blocking acetylcholine release from the nerve termini. PLA2 catalyzes the calcium-dependent hydrolysis of the 2-acyl groups in 3-sn-phosphoglycerides. The chain is Basic phospholipase A2 beta-bungarotoxin A2 chain from Bungarus multicinctus (Many-banded krait).